The following is a 345-amino-acid chain: N-acetyl-gamma-glutamyl-phosphate reductase (345 aa).

C149 is an active-site residue.

It belongs to the NAGSA dehydrogenase family. Type 1 subfamily.

Its subcellular location is the cytoplasm. It catalyses the reaction N-acetyl-L-glutamate 5-semialdehyde + phosphate + NADP(+) = N-acetyl-L-glutamyl 5-phosphate + NADPH + H(+). It functions in the pathway amino-acid biosynthesis; L-arginine biosynthesis; N(2)-acetyl-L-ornithine from L-glutamate: step 3/4. Catalyzes the NADPH-dependent reduction of N-acetyl-5-glutamyl phosphate to yield N-acetyl-L-glutamate 5-semialdehyde. The sequence is that of N-acetyl-gamma-glutamyl-phosphate reductase from Bacillus cereus (strain AH187).